A 100-amino-acid polypeptide reads, in one-letter code: Aspartyl/glutamyl-tRNA(Asn/Gln) amidotransferase subunit C (100 aa).

This sequence belongs to the GatC family. Heterotrimer of A, B and C subunits.

The enzyme catalyses L-glutamyl-tRNA(Gln) + L-glutamine + ATP + H2O = L-glutaminyl-tRNA(Gln) + L-glutamate + ADP + phosphate + H(+). It carries out the reaction L-aspartyl-tRNA(Asn) + L-glutamine + ATP + H2O = L-asparaginyl-tRNA(Asn) + L-glutamate + ADP + phosphate + 2 H(+). In terms of biological role, allows the formation of correctly charged Asn-tRNA(Asn) or Gln-tRNA(Gln) through the transamidation of misacylated Asp-tRNA(Asn) or Glu-tRNA(Gln) in organisms which lack either or both of asparaginyl-tRNA or glutaminyl-tRNA synthetases. The reaction takes place in the presence of glutamine and ATP through an activated phospho-Asp-tRNA(Asn) or phospho-Glu-tRNA(Gln). The polypeptide is Aspartyl/glutamyl-tRNA(Asn/Gln) amidotransferase subunit C (Streptococcus equi subsp. zooepidemicus (strain H70)).